Here is a 146-residue protein sequence, read N- to C-terminus: Anti-sigma F factor (146 aa).

It belongs to the anti-sigma-factor family.

The catalysed reaction is L-seryl-[protein] + ATP = O-phospho-L-seryl-[protein] + ADP + H(+). It carries out the reaction L-threonyl-[protein] + ATP = O-phospho-L-threonyl-[protein] + ADP + H(+). Functionally, binds to sigma F and blocks its ability to form an RNA polymerase holoenzyme (E-sigma F). Phosphorylates SpoIIAA on a serine residue. This phosphorylation may enable SpoIIAA to act as an anti-anti-sigma factor that counteracts SpoIIAB and thus releases sigma F from inhibition. The chain is Anti-sigma F factor from Geobacillus thermodenitrificans (strain NG80-2).